The primary structure comprises 179 residues: Large ribosomal subunit protein uL5 (179 aa).

It belongs to the universal ribosomal protein uL5 family. Part of the 50S ribosomal subunit; part of the 5S rRNA/L5/L18/L25 subcomplex. Contacts the 5S rRNA and the P site tRNA. Forms a bridge to the 30S subunit in the 70S ribosome.

In terms of biological role, this is one of the proteins that bind and probably mediate the attachment of the 5S RNA into the large ribosomal subunit, where it forms part of the central protuberance. In the 70S ribosome it contacts protein S13 of the 30S subunit (bridge B1b), connecting the 2 subunits; this bridge is implicated in subunit movement. Contacts the P site tRNA; the 5S rRNA and some of its associated proteins might help stabilize positioning of ribosome-bound tRNAs. This is Large ribosomal subunit protein uL5 from Francisella tularensis subsp. mediasiatica (strain FSC147).